The chain runs to 200 residues: MSGTNKQTNLHRQTETIRQLLGSKVVVLVGLMGAGKSTIGRKVANMLNLPFKDADTEIETVSRMTVAELFEAYGEVEFRDLERRVILRLLDDGPMVLATGGGAYMNAETRAAIAEAGISIWINADLDVLMERVSRRQNRPLLRNSDPRGVMQRLMDERYPVYALAELHLMTRDEKKEVIAAELIEVLAAHLEKEQAASAG.

33–38 (GAGKST) contributes to the ATP binding site. S37 is a binding site for Mg(2+). Residues D55, R79, and G101 each coordinate substrate. R139 contacts ATP. A substrate-binding site is contributed by R158.

The protein belongs to the shikimate kinase family. Monomer. The cofactor is Mg(2+).

The protein resides in the cytoplasm. It carries out the reaction shikimate + ATP = 3-phosphoshikimate + ADP + H(+). Its pathway is metabolic intermediate biosynthesis; chorismate biosynthesis; chorismate from D-erythrose 4-phosphate and phosphoenolpyruvate: step 5/7. Its function is as follows. Catalyzes the specific phosphorylation of the 3-hydroxyl group of shikimic acid using ATP as a cosubstrate. In Brucella abortus (strain S19), this protein is Shikimate kinase.